The following is a 131-amino-acid chain: Aspartate 1-decarboxylase (131 aa).

S25 serves as the catalytic Schiff-base intermediate with substrate; via pyruvic acid. Residue S25 is modified to Pyruvic acid (Ser). T57 is a substrate binding site. Y58 (proton donor) is an active-site residue. 73–75 (GSA) provides a ligand contact to substrate.

The protein belongs to the PanD family. In terms of assembly, heterooctamer of four alpha and four beta subunits. Pyruvate is required as a cofactor. Post-translationally, is synthesized initially as an inactive proenzyme, which is activated by self-cleavage at a specific serine bond to produce a beta-subunit with a hydroxyl group at its C-terminus and an alpha-subunit with a pyruvoyl group at its N-terminus.

It is found in the cytoplasm. It catalyses the reaction L-aspartate + H(+) = beta-alanine + CO2. It functions in the pathway cofactor biosynthesis; (R)-pantothenate biosynthesis; beta-alanine from L-aspartate: step 1/1. Functionally, catalyzes the pyruvoyl-dependent decarboxylation of aspartate to produce beta-alanine. The chain is Aspartate 1-decarboxylase from Leptothrix cholodnii (strain ATCC 51168 / LMG 8142 / SP-6) (Leptothrix discophora (strain SP-6)).